Here is a 229-residue protein sequence, read N- to C-terminus: Phosphoglycolate phosphatase (229 aa).

Catalysis depends on Asp18, which acts as the Nucleophile. The Mg(2+) site is built by Asp18, Asp20, and Asp176.

Belongs to the HAD-like hydrolase superfamily. CbbY/CbbZ/Gph/YieH family. The cofactor is Mg(2+).

The enzyme catalyses 2-phosphoglycolate + H2O = glycolate + phosphate. It participates in organic acid metabolism; glycolate biosynthesis; glycolate from 2-phosphoglycolate: step 1/1. In terms of biological role, specifically catalyzes the dephosphorylation of 2-phosphoglycolate. Is involved in the dissimilation of the intracellular 2-phosphoglycolate formed during the DNA repair of 3'-phosphoglycolate ends, a major class of DNA lesions induced by oxidative stress. This Xylella fastidiosa (strain Temecula1 / ATCC 700964) protein is Phosphoglycolate phosphatase.